A 239-amino-acid polypeptide reads, in one-letter code: Orotidine 5'-phosphate decarboxylase (239 aa).

Substrate is bound by residues Asp-15, Lys-36, Asp-63–Thr-72, Thr-127, Arg-189, Gln-198, Gly-218, and Arg-219. The active-site Proton donor is Lys-65.

This sequence belongs to the OMP decarboxylase family. Type 1 subfamily. As to quaternary structure, homodimer.

It carries out the reaction orotidine 5'-phosphate + H(+) = UMP + CO2. Its pathway is pyrimidine metabolism; UMP biosynthesis via de novo pathway; UMP from orotate: step 2/2. Catalyzes the decarboxylation of orotidine 5'-monophosphate (OMP) to uridine 5'-monophosphate (UMP). The sequence is that of Orotidine 5'-phosphate decarboxylase from Prochlorococcus marinus subsp. pastoris (strain CCMP1986 / NIES-2087 / MED4).